The primary structure comprises 139 residues: Putative pre-16S rRNA nuclease (139 aa).

It belongs to the YqgF nuclease family.

Its subcellular location is the cytoplasm. In terms of biological role, could be a nuclease involved in processing of the 5'-end of pre-16S rRNA. The polypeptide is Putative pre-16S rRNA nuclease (Streptococcus equi subsp. equi (strain 4047)).